Here is a 436-residue protein sequence, read N- to C-terminus: Mitochondrial distribution and morphology protein 12 (436 aa).

The SMP-LTD domain occupies 1–436 (MSIEVNWGTA…VFPSFYTFLI (436 aa)). The segment covering 73-84 (DEDGDSGSEISE) has biased composition (acidic residues). 3 disordered regions span residues 73–98 (DEDG…WDRT), 184–275 (AVAG…RMRE), and 352–380 (GSGS…PHQK). Basic and acidic residues predominate over residues 85 to 98 (ELQHRTHDNPWDRT). 2 stretches are compositionally biased toward polar residues: residues 190-206 (PFTT…QGNK) and 222-243 (DSSN…SNRS). Over residues 244 to 255 (SHPDGHPEHNDD) the composition is skewed to basic and acidic residues. Residues 256-267 (PISSSENPLLQN) show a composition bias toward polar residues.

Belongs to the MDM12 family. In terms of assembly, component of the ER-mitochondria encounter structure (ERMES) or MDM complex, composed of mmm1, mdm10, mdm12 and mdm34. A mmm1 homodimer associates with one molecule of mdm12 on each side in a pairwise head-to-tail manner, and the SMP-LTD domains of mmm1 and mdm12 generate a continuous hydrophobic tunnel for phospholipid trafficking.

The protein resides in the mitochondrion outer membrane. Its subcellular location is the endoplasmic reticulum membrane. In terms of biological role, component of the ERMES/MDM complex, which serves as a molecular tether to connect the endoplasmic reticulum (ER) and mitochondria. Components of this complex are involved in the control of mitochondrial shape and protein biogenesis, and function in nonvesicular lipid trafficking between the ER and mitochondria. Mdm12 is required for the interaction of the ER-resident membrane protein mmm1 and the outer mitochondrial membrane-resident beta-barrel protein mdm10. The mdm12-mmm1 subcomplex functions in the major beta-barrel assembly pathway that is responsible for biogenesis of all mitochondrial outer membrane beta-barrel proteins, and acts in a late step after the SAM complex. The mdm10-mdm12-mmm1 subcomplex further acts in the TOM40-specific pathway after the action of the mdm12-mmm1 complex. Essential for establishing and maintaining the structure of mitochondria and maintenance of mtDNA nucleoids. In Emericella nidulans (strain FGSC A4 / ATCC 38163 / CBS 112.46 / NRRL 194 / M139) (Aspergillus nidulans), this protein is Mitochondrial distribution and morphology protein 12.